Consider the following 273-residue polypeptide: Pyrroline-5-carboxylate reductase (273 aa).

Belongs to the pyrroline-5-carboxylate reductase family.

It localises to the cytoplasm. The catalysed reaction is L-proline + NADP(+) = (S)-1-pyrroline-5-carboxylate + NADPH + 2 H(+). The enzyme catalyses L-proline + NAD(+) = (S)-1-pyrroline-5-carboxylate + NADH + 2 H(+). It functions in the pathway amino-acid biosynthesis; L-proline biosynthesis; L-proline from L-glutamate 5-semialdehyde: step 1/1. This Pisum sativum (Garden pea) protein is Pyrroline-5-carboxylate reductase (PROC).